The following is a 193-amino-acid chain: MQLLEERILTDGNILGENILKVDNFLTHQVDYRSMKAIGKVFAQKYAEAGITKVVTIEASGIAPAVYAAEAMDVPMIFAKKHKNITMTEGILTAEVYSFTKQVTSTVSIAGKFLSKEDKVLIIDDFLANGQAAKGLIEIIGQAGAQVVGVGIVIEKSFQDGRRLIEDMGIEVTSLARIKNFENGNLNFLEADA.

Leucine 20 and threonine 27 together coordinate xanthine. Residue alanine 128–alanine 132 coordinates 5-phospho-alpha-D-ribose 1-diphosphate. Lysine 156 contacts xanthine.

It belongs to the purine/pyrimidine phosphoribosyltransferase family. Xpt subfamily. Homodimer.

The protein resides in the cytoplasm. The enzyme catalyses XMP + diphosphate = xanthine + 5-phospho-alpha-D-ribose 1-diphosphate. It participates in purine metabolism; XMP biosynthesis via salvage pathway; XMP from xanthine: step 1/1. Functionally, converts the preformed base xanthine, a product of nucleic acid breakdown, to xanthosine 5'-monophosphate (XMP), so it can be reused for RNA or DNA synthesis. The chain is Xanthine phosphoribosyltransferase from Streptococcus pyogenes serotype M49 (strain NZ131).